The following is a 473-amino-acid chain: Fumarate hydratase class II (473 aa).

Residues 104–106 (SGT), 128–131 (HPND), 138–140 (SSN), and T186 each bind substrate. H187 functions as the Proton donor/acceptor in the catalytic mechanism. S318 is a catalytic residue. Substrate-binding positions include S319 and 324–326 (KVN).

Belongs to the class-II fumarase/aspartase family. Fumarase subfamily. In terms of assembly, homotetramer.

Its subcellular location is the cytoplasm. The catalysed reaction is (S)-malate = fumarate + H2O. The protein operates within carbohydrate metabolism; tricarboxylic acid cycle; (S)-malate from fumarate: step 1/1. Its function is as follows. Involved in the TCA cycle. Catalyzes the stereospecific interconversion of fumarate to L-malate. This chain is Fumarate hydratase class II, found in Corynebacterium glutamicum (strain ATCC 13032 / DSM 20300 / JCM 1318 / BCRC 11384 / CCUG 27702 / LMG 3730 / NBRC 12168 / NCIMB 10025 / NRRL B-2784 / 534).